Here is a 274-residue protein sequence, read N- to C-terminus: Penicillin-insensitive murein endopeptidase (274 aa).

An N-terminal signal peptide occupies residues 1-19 (MKKTVIALLAWFVSSASLA). 3 disulfide bridges follow: Cys-44/Cys-265, Cys-187/Cys-235, and Cys-216/Cys-223. Zn(2+) contacts are provided by His-110, His-113, Asp-120, Asp-147, His-150, and His-211. The tract at residues 225 to 274 (DQPLPPPGDGCGAELQSWFEPPKPGTTKPEKKTPPPLPPSCQALLDEHVL) is disordered.

This sequence belongs to the peptidase M74 family. Dimer. Zn(2+) is required as a cofactor.

It localises to the periplasm. Murein endopeptidase that cleaves the D-alanyl-meso-2,6-diamino-pimelyl amide bond that connects peptidoglycan strands. Likely plays a role in the removal of murein from the sacculus. The chain is Penicillin-insensitive murein endopeptidase from Salmonella paratyphi C (strain RKS4594).